The chain runs to 133 residues: Vesicle transport protein GOT1A (133 aa).

The Cytoplasmic segment spans residues 1 to 9; that stretch reads MISITEWQK. A helical membrane pass occupies residues 10-30; that stretch reads IGVGITGFGVFFILFGILLYF. A topological domain (lumenal) is located at residue Asp-31. Residues 32 to 52 form a helical membrane-spanning segment; the sequence is SVLLAFGNLLFLTGLSLIIGL. Residues 53–68 are Cytoplasmic-facing; sequence RRTFAFFFQRHKLKGT. A helical membrane pass occupies residues 69–89; sequence SFFLGGVAIVLLRWPLLGMLL. Topologically, residues 90–92 are lumenal; sequence EAY. The chain crosses the membrane as a helical span at residues 93–113; sequence GFISLFKGFFPVVFGFLGSAF. At 114–133 the chain is on the cytoplasmic side; it reads NIPFLSTLFQKLQGSSSSMV.

The protein belongs to the GOT1 family.

Its subcellular location is the golgi apparatus membrane. May be involved in fusion of ER-derived transport vesicles with the Golgi complex. This is Vesicle transport protein GOT1A from Mus musculus (Mouse).